The sequence spans 587 residues: Putative phagocytic receptor 1b (587 aa).

The first 23 residues, methionine 1–serine 23, serve as a signal peptide directing secretion. Helical transmembrane passes span leucine 223–isoleucine 243, isoleucine 294–phenylalanine 314, glycine 319–tyrosine 339, alanine 354–leucine 374, isoleucine 390–valine 410, isoleucine 448–asparagine 468, glycine 480–leucine 500, valine 524–leucine 544, and isoleucine 556–phenylalanine 576.

It belongs to the nonaspanin (TM9SF) (TC 9.A.2) family.

It localises to the membrane. Involved in adhesion and phagocytosis of hydrophilic particles. This chain is Putative phagocytic receptor 1b (phg1b), found in Dictyostelium discoideum (Social amoeba).